Consider the following 358-residue polypeptide: Sulfate/thiosulfate import ATP-binding protein CysA 1 (358 aa).

An ABC transporter domain is found at 3–237; that stretch reads IQVENIRKAF…PASAFVYGFL (235 aa). 35-42 is a binding site for ATP; sequence GPSGCGKT.

It belongs to the ABC transporter superfamily. Sulfate/tungstate importer (TC 3.A.1.6) family. As to quaternary structure, the complex is composed of two ATP-binding proteins (CysA), two transmembrane proteins (CysT and CysW) and a solute-binding protein (CysP).

The protein resides in the cell inner membrane. It carries out the reaction sulfate(out) + ATP + H2O = sulfate(in) + ADP + phosphate + H(+). The catalysed reaction is thiosulfate(out) + ATP + H2O = thiosulfate(in) + ADP + phosphate + H(+). Part of the ABC transporter complex CysAWTP involved in sulfate/thiosulfate import. Responsible for energy coupling to the transport system. The chain is Sulfate/thiosulfate import ATP-binding protein CysA 1 from Chromobacterium violaceum (strain ATCC 12472 / DSM 30191 / JCM 1249 / CCUG 213 / NBRC 12614 / NCIMB 9131 / NCTC 9757 / MK).